The sequence spans 151 residues: UPF0178 protein Shal_3046 (151 aa).

This sequence belongs to the UPF0178 family.

The protein is UPF0178 protein Shal_3046 of Shewanella halifaxensis (strain HAW-EB4).